The sequence spans 480 residues: Glutamate--tRNA ligase (480 aa).

Residues 8–18 (PSPTGPLHIGG) carry the 'HIGH' region motif. The short motif at 249 to 253 (KMSKR) is the 'KMSKS' region element. Lysine 252 contacts ATP.

It belongs to the class-I aminoacyl-tRNA synthetase family. Glutamate--tRNA ligase type 1 subfamily. Monomer.

Its subcellular location is the cytoplasm. The catalysed reaction is tRNA(Glu) + L-glutamate + ATP = L-glutamyl-tRNA(Glu) + AMP + diphosphate. In terms of biological role, catalyzes the attachment of glutamate to tRNA(Glu) in a two-step reaction: glutamate is first activated by ATP to form Glu-AMP and then transferred to the acceptor end of tRNA(Glu). The chain is Glutamate--tRNA ligase from Carboxydothermus hydrogenoformans (strain ATCC BAA-161 / DSM 6008 / Z-2901).